The primary structure comprises 74 residues: MSNFRVESKIRLSDTDIAVLHQRIVQLESTVTRLAENDLQNTIDSKPLTEVIVRNSTNIEQLQKQMAQCSCGQF.

This is an uncharacterized protein from Invertebrate iridescent virus 3 (IIV-3).